A 332-amino-acid polypeptide reads, in one-letter code: Phosphate acyltransferase (332 aa).

The protein belongs to the PlsX family. As to quaternary structure, homodimer. Probably interacts with PlsY.

The protein localises to the cytoplasm. The catalysed reaction is a fatty acyl-[ACP] + phosphate = an acyl phosphate + holo-[ACP]. It participates in lipid metabolism; phospholipid metabolism. Catalyzes the reversible formation of acyl-phosphate (acyl-PO(4)) from acyl-[acyl-carrier-protein] (acyl-ACP). This enzyme utilizes acyl-ACP as fatty acyl donor, but not acyl-CoA. This chain is Phosphate acyltransferase, found in Caldanaerobacter subterraneus subsp. tengcongensis (strain DSM 15242 / JCM 11007 / NBRC 100824 / MB4) (Thermoanaerobacter tengcongensis).